The following is a 184-amino-acid chain: MARLEVPRPATFVTLTGFMGVGKSRIGRELARALMLHFIDLDRYIERRTGISIPDIFRHLGEEAFRRMEKEAVRELVGKDYLVLSLGGGTFMDPESQKALLGRGPVVALWASPETILERAMRKPGERPLLQVENPLERIRTLLEARAPVYRKAHIHVSTDGRRVEEVVEEIVEKLWRHAEARGA.

Glycine 20–arginine 25 lines the ATP pocket. Position 24 (serine 24) interacts with Mg(2+). Positions 42, 66, and 88 each coordinate substrate. Arginine 127 is a binding site for ATP. A substrate-binding site is contributed by arginine 146. Arginine 162 contacts ATP.

Belongs to the shikimate kinase family. Monomer. It depends on Mg(2+) as a cofactor.

It localises to the cytoplasm. The catalysed reaction is shikimate + ATP = 3-phosphoshikimate + ADP + H(+). It functions in the pathway metabolic intermediate biosynthesis; chorismate biosynthesis; chorismate from D-erythrose 4-phosphate and phosphoenolpyruvate: step 5/7. Catalyzes the specific phosphorylation of the 3-hydroxyl group of shikimic acid using ATP as a cosubstrate. In Thermus thermophilus (strain ATCC 27634 / DSM 579 / HB8), this protein is Shikimate kinase.